Reading from the N-terminus, the 975-residue chain is NLR family member X1 (975 aa).

The transit peptide at methionine 1–leucine 86 directs the protein to the mitochondrion. Positions alanine 75 to isoleucine 556 are required for interaction with MAVS. The region spanning glutamine 160 to glutamate 483 is the NACHT domain. Glycine 166–serine 173 is an ATP binding site. The interval isoleucine 556–glycine 974 is required for the repression of MAVS-induced interferon signaling. The LRRNT domain maps to arginine 667–valine 694. 8 LRR repeats span residues leucine 695–alanine 718, arginine 724–proline 747, phenylalanine 749–aspartate 777, glutamine 778–glutamate 801, histidine 811–asparagine 834, arginine 835–arginine 857, alanine 858–serine 877, and glutamate 878–serine 899. The LRRCT domain maps to valine 906 to leucine 970.

Belongs to the NLRP family. As to quaternary structure, homohexamer. Interacts with MAVS. Interacts with TUFM. In terms of assembly, (Microbial infection) Interacts with influenza A virus protein PB1-F2. As to expression, ubiquitously expressed. Strongest expression in mammary gland, heart and muscle. Detected in HeLa, HEK293T, THP-1, HL-60, Raji and Jurkat cell lines (at protein level).

It is found in the mitochondrion outer membrane. In terms of biological role, participates in antiviral signaling. Acts as a negative regulator of MAVS-mediated antiviral responses, through the inhibition of the virus-induced RLH (RIG-like helicase)-MAVS interaction. Instead, promotes autophagy by interacting with TUFM and subsequently recruiting the autophagy-related proteins ATG5 and ATG12. Also regulates MAVS-dependent NLRP3 inflammasome activation to attenuate apoptosis. Has no inhibitory function on NF-kappa-B signaling pathway, but enhances NF-kappa-B and JUN N-terminal kinase dependent signaling through the production of reactive oxygen species. Regulates viral mediated-inflammation and energy metabolism in a sex-dependent manner. In females, prevents uncontrolled inflammation and energy metabolism and thus, may contribute to the sex differences observed in infectious and inflammatory diseases. This is NLR family member X1 (NLRX1) from Homo sapiens (Human).